Here is a 251-residue protein sequence, read N- to C-terminus: Triosephosphate isomerase (251 aa).

9-11 lines the substrate pocket; sequence NWK. Residue histidine 95 is the Electrophile of the active site. The Proton acceptor role is filled by glutamate 167. Residues glycine 173, serine 213, and 234-235 each bind substrate; that span reads GG.

Belongs to the triosephosphate isomerase family. In terms of assembly, homodimer.

The protein localises to the cytoplasm. The catalysed reaction is D-glyceraldehyde 3-phosphate = dihydroxyacetone phosphate. It participates in carbohydrate biosynthesis; gluconeogenesis. The protein operates within carbohydrate degradation; glycolysis; D-glyceraldehyde 3-phosphate from glycerone phosphate: step 1/1. Functionally, involved in the gluconeogenesis. Catalyzes stereospecifically the conversion of dihydroxyacetone phosphate (DHAP) to D-glyceraldehyde-3-phosphate (G3P). The chain is Triosephosphate isomerase from Enterococcus faecalis (strain ATCC 700802 / V583).